The sequence spans 337 residues: Fructose-1,6-bisphosphatase class 1 (337 aa).

Glu-89, Asp-112, Leu-114, and Asp-115 together coordinate Mg(2+). Substrate contacts are provided by residues 115 to 118, Asn-208, Tyr-241, and Lys-271; that span reads DGSS. Glu-277 contributes to the Mg(2+) binding site.

It belongs to the FBPase class 1 family. In terms of assembly, homotetramer. Mg(2+) serves as cofactor.

The protein resides in the cytoplasm. It catalyses the reaction beta-D-fructose 1,6-bisphosphate + H2O = beta-D-fructose 6-phosphate + phosphate. It functions in the pathway carbohydrate biosynthesis; gluconeogenesis. This chain is Fructose-1,6-bisphosphatase class 1, found in Yersinia enterocolitica serotype O:8 / biotype 1B (strain NCTC 13174 / 8081).